Here is a 513-residue protein sequence, read N- to C-terminus: Maturase K (513 aa).

This sequence belongs to the intron maturase 2 family. MatK subfamily.

The protein resides in the plastid. It localises to the chloroplast. Functionally, usually encoded in the trnK tRNA gene intron. Probably assists in splicing its own and other chloroplast group II introns. The polypeptide is Maturase K (Byblis liniflora (Carnivorous plant)).